We begin with the raw amino-acid sequence, 177 residues long: MSRIGLKVIEVPAGVTVTKDGENNITVKGPKGELTRHFNPIIEMHEEGNLINFTRSSDSDRAMHGTMRANLNNMILGVTEGFKKTLDLIGVGYRAQLKGKTLVLNVGYSHPVEMEAPEGVNVEVPSNTNIIISGISKQKVGQFAAEIRDVRPPEPYKGKGIRYTDEHVRRKEGKTGK.

This sequence belongs to the universal ribosomal protein uL6 family. In terms of assembly, part of the 50S ribosomal subunit.

This protein binds to the 23S rRNA, and is important in its secondary structure. It is located near the subunit interface in the base of the L7/L12 stalk, and near the tRNA binding site of the peptidyltransferase center. In Latilactobacillus sakei subsp. sakei (strain 23K) (Lactobacillus sakei subsp. sakei), this protein is Large ribosomal subunit protein uL6.